The following is a 556-amino-acid chain: Arginine--tRNA ligase 2 (556 aa).

The 'HIGH' region signature appears at 132–142; that stretch reads ANPTGDLHLGH.

The protein belongs to the class-I aminoacyl-tRNA synthetase family. Monomer.

The protein resides in the cytoplasm. It carries out the reaction tRNA(Arg) + L-arginine + ATP = L-arginyl-tRNA(Arg) + AMP + diphosphate. The chain is Arginine--tRNA ligase 2 from Bacillus thuringiensis subsp. konkukian (strain 97-27).